Reading from the N-terminus, the 872-residue chain is Alanine--tRNA ligase (872 aa).

Positions 567, 571, 669, and 673 each coordinate Zn(2+).

It belongs to the class-II aminoacyl-tRNA synthetase family. Zn(2+) is required as a cofactor.

It localises to the cytoplasm. It catalyses the reaction tRNA(Ala) + L-alanine + ATP = L-alanyl-tRNA(Ala) + AMP + diphosphate. In terms of biological role, catalyzes the attachment of alanine to tRNA(Ala) in a two-step reaction: alanine is first activated by ATP to form Ala-AMP and then transferred to the acceptor end of tRNA(Ala). Also edits incorrectly charged Ser-tRNA(Ala) and Gly-tRNA(Ala) via its editing domain. This is Alanine--tRNA ligase from Streptococcus thermophilus (strain CNRZ 1066).